Consider the following 159-residue polypeptide: 2-C-methyl-D-erythritol 2,4-cyclodiphosphate synthase (159 aa).

Residues aspartate 8 and histidine 10 each contribute to the a divalent metal cation site. Residues 8–10 and 34–35 contribute to the 4-CDP-2-C-methyl-D-erythritol 2-phosphate site; these read DVH and HS. Histidine 42 provides a ligand contact to a divalent metal cation. 4-CDP-2-C-methyl-D-erythritol 2-phosphate contacts are provided by residues 56–58, 61–65, 100–106, 132–135, phenylalanine 139, and arginine 142; these read DIG, FPDTD, AQAPKMA, and TTTE.

Belongs to the IspF family. In terms of assembly, homotrimer. The cofactor is a divalent metal cation.

The enzyme catalyses 4-CDP-2-C-methyl-D-erythritol 2-phosphate = 2-C-methyl-D-erythritol 2,4-cyclic diphosphate + CMP. It functions in the pathway isoprenoid biosynthesis; isopentenyl diphosphate biosynthesis via DXP pathway; isopentenyl diphosphate from 1-deoxy-D-xylulose 5-phosphate: step 4/6. Its function is as follows. Involved in the biosynthesis of isopentenyl diphosphate (IPP) and dimethylallyl diphosphate (DMAPP), two major building blocks of isoprenoid compounds. Catalyzes the conversion of 4-diphosphocytidyl-2-C-methyl-D-erythritol 2-phosphate (CDP-ME2P) to 2-C-methyl-D-erythritol 2,4-cyclodiphosphate (ME-CPP) with a corresponding release of cytidine 5-monophosphate (CMP). The chain is 2-C-methyl-D-erythritol 2,4-cyclodiphosphate synthase from Cronobacter sakazakii (strain ATCC BAA-894) (Enterobacter sakazakii).